We begin with the raw amino-acid sequence, 402 residues long: MAT+ sexual cell fertilization-promoting factor (402 aa).

The HMG box DNA-binding region spans 169-237 (IPRPPNAYIL…KLMSAHPHYR (69 aa)). Residues 246-272 (IRRRAPRRNRAQEVANASPIGENSGAP) form a disordered region.

Its subcellular location is the nucleus. Functionally, controls fertilization, probably by determining the mating type. The chain is MAT+ sexual cell fertilization-promoting factor (FPR1) from Podospora anserina (Pleurage anserina).